The chain runs to 544 residues: Aspartokinase (544 aa).

The 73-residue stretch at 463 to 535 (LVGKQMVNFI…SAIGDSSAVD (73 aa)) folds into the ACT domain.

This sequence belongs to the aspartokinase family.

The catalysed reaction is L-aspartate + ATP = 4-phospho-L-aspartate + ADP. It functions in the pathway amino-acid biosynthesis; L-methionine biosynthesis via de novo pathway; L-homoserine from L-aspartate: step 1/3. The protein operates within amino-acid biosynthesis; L-threonine biosynthesis; L-threonine from L-aspartate: step 1/5. In terms of biological role, phosphorylates aspartate, the first step in the biosynthesis of amino acids that derive from aspartate (the aspartate family of amino acids), including methioinine and threonine, the latter of which is a precursor to isoleucine. The polypeptide is Aspartokinase (Candida albicans (strain SC5314 / ATCC MYA-2876) (Yeast)).